We begin with the raw amino-acid sequence, 54 residues long: MHTPIGVKPVAGSKEWREAWQKRAFAHISNGYKYIYIAIDSPEIFLLVCSLIRI.

This sequence belongs to the YojO family.

The polypeptide is Protein YojO (yojO) (Escherichia coli (strain K12)).